The chain runs to 198 residues: Glycerol-3-phosphate acyltransferase (198 aa).

Transmembrane regions (helical) follow at residues 5-25 (LILL…LWIG), 56-76 (SIVT…PFFF), 84-104 (FWLL…FAGF), 114-134 (AGVI…VFLV), and 158-178 (LFMG…FVIW).

It belongs to the PlsY family. Probably interacts with PlsX.

Its subcellular location is the cell membrane. It catalyses the reaction an acyl phosphate + sn-glycerol 3-phosphate = a 1-acyl-sn-glycero-3-phosphate + phosphate. The protein operates within lipid metabolism; phospholipid metabolism. Functionally, catalyzes the transfer of an acyl group from acyl-phosphate (acyl-PO(4)) to glycerol-3-phosphate (G3P) to form lysophosphatidic acid (LPA). This enzyme utilizes acyl-phosphate as fatty acyl donor, but not acyl-CoA or acyl-ACP. This Listeria monocytogenes serotype 4b (strain CLIP80459) protein is Glycerol-3-phosphate acyltransferase.